The sequence spans 56 residues: uncharacterized protein (56 aa).

A helical transmembrane segment spans residues Gly-12–Gly-32. A hydrophobic region spans residues Phe-19–Val-31.

It localises to the membrane. This is an uncharacterized protein from Chenopodium amaranticolor (Quinoa).